Consider the following 148-residue polypeptide: MIKEELNLWAEGVEFRHWDAYYNFILSVLNFLCIKEYELSVILCNNEYIQKLNGEFRQKPEPTDVLSFNYFEGSEQINHKIQGDIIISLEYLEFSSLEFNVEMYEELQRNTIHGILHLIGYTHDTNDFQNETMLIIQERVLRETRRVF.

Zn(2+) is bound by residues H113, H117, and H123.

This sequence belongs to the endoribonuclease YbeY family. Zn(2+) is required as a cofactor.

Its subcellular location is the cytoplasm. Single strand-specific metallo-endoribonuclease involved in late-stage 70S ribosome quality control and in maturation of the 3' terminus of the 16S rRNA. The polypeptide is Endoribonuclease YbeY (Borrelia duttonii (strain Ly)).